The primary structure comprises 276 residues: Carbonic anhydrase Nec1 (276 aa).

The signal sequence occupies residues 1-27 (MKMINSIFTHGSLIILLLLFHSISIKA). One can recognise an Alpha-carbonic anhydrase domain in the interval 34-270 (REFDYLEGSE…LNHREVQLHC (237 aa)). A disulfide bridge links Cys59 with Cys220. His98 (proton acceptor) is an active-site residue. Residues His124 and His126 each contribute to the Zn(2+) site. Asn134 carries N-linked (GlcNAc...) asparagine glycosylation. A Zn(2+)-binding site is contributed by His143. The substrate binding stretch occupies residues 216-217 (TT).

The protein belongs to the alpha-class carbonic anhydrase family. In terms of assembly, homodimer. It depends on Zn(2+) as a cofactor. Confined to nectaries.

It carries out the reaction hydrogencarbonate + H(+) = CO2 + H2O. It participates in one-carbon metabolism. Involved in the production of blood-red nectar containing the alkaloid nesocodin and that serves as a visual attractant for pollinator visitation, including vertebrates such as Phelsuma geckos. The nectar is initially acidic and pale yellow, but slowly becomes alkaline before turning into red within 24 hours. Together with NEC2 and NEC3, facilitates the condensation of sinapaldehyde ((E)-3,5-dimethoxy-4-hydroxycinnamaldehyde) and proline to form nesocodin, a pigment with a stable imine bond. Mediates the alkalinization (pH increase) of the flower nectar by catalyzing the reversible hydration of carbon dioxide. The sequence is that of Carbonic anhydrase Nec1 from Nesocodon mauritianus (Blue Mauritius bellflower).